Reading from the N-terminus, the 390-residue chain is Flavohemoprotein (390 aa).

Ser2 is modified (N-acetylserine). Positions 12–149 (PLTPTEINFL…LAQTLIDAEA (138 aa)) constitute a Globin domain. Residue His96 coordinates heme b. Catalysis depends on charge relay system residues Tyr106 and Glu148. A reductase region spans residues 157–390 (WEEFKDFRVT…EFFGPTDPDC (234 aa)). The FAD-binding FR-type domain occupies 158 to 263 (EEFKDFRVTK…HAPVGTMKYD (106 aa)). Residues Tyr196 and 214–217 (REYS) contribute to the FAD site. An NADP(+)-binding site is contributed by 277-282 (GIGITP). 382–385 (FFGP) is a binding site for FAD.

Belongs to the globin family. Two-domain flavohemoproteins subfamily. The protein in the C-terminal section; belongs to the flavoprotein pyridine nucleotide cytochrome reductase family. Requires FAD as cofactor. It depends on heme b as a cofactor.

The protein resides in the cytoplasm. The enzyme catalyses 2 nitric oxide + NADPH + 2 O2 = 2 nitrate + NADP(+) + H(+). It catalyses the reaction 2 nitric oxide + NADH + 2 O2 = 2 nitrate + NAD(+) + H(+). Its function is as follows. Is involved in NO detoxification in an aerobic process, termed nitric oxide dioxygenase (NOD) reaction that utilizes O(2) and NAD(P)H to convert NO to nitrate, which protects the fungus from various noxious nitrogen compounds. Therefore, plays a central role in the inducible response to nitrosative stress. In terms of biological role, in the presence of oxygen and NADH, it has NADH oxidase activity, which leads to the generation of superoxide and H(2)O(2). Under anaerobic conditions, it also exhibits nitric oxide reductase and FAD reductase activities. However, all these reactions are much lower than NOD activity. In Candida norvegensis (Yeast), this protein is Flavohemoprotein.